A 388-amino-acid chain; its full sequence is Transcription factor SOX-7 (388 aa).

Disordered stretches follow at residues 20–46 (DAELSDGQSPPAVPRPPGDKGSESRIR) and 140–197 (RDQN…VDTY). Basic and acidic residues-rich tracts occupy residues 36-45 (PGDKGSESRI) and 146-164 (PEKRSGSRGALGEKEDRGE). A DNA-binding region (HMG box) is located at residues 45–113 (IRRPMNAFMV…QHMQDYPNYK (69 aa)). Residues 268–388 (VSMMSPVPGC…ATYYNSYSVS (121 aa)) form the Sox C-terminal domain.

In terms of assembly, interacts with CTNNB1/beta-catenin; this interaction may lead to the proteasomal degradation of active CTNNB1 and thus inhibition of Wnt/beta-catenin-stimulated transcription. In terms of tissue distribution, widely expressed in adult and fetal tissues. Present both in mesenchymal and epithelial cells in some adult tissues, including colon. Tends to be down-regulated in prostate adenocarcinomas and colorectal tumors due to promoter hypermethylation.

The protein resides in the nucleus. It localises to the cytoplasm. Its function is as follows. Binds to and activates the CDH5 promoter, hence plays a role in the transcriptional regulation of genes expressed in the hemogenic endothelium and blocks further differentiation into blood precursors. May be required for the survival of both hematopoietic and endothelial precursors during specification. Competes with GATA4 for binding and activation of the FGF3 promoter. Represses Wnt/beta-catenin-stimulated transcription, probably by targeting CTNNB1 to proteasomal degradation. Binds the DNA sequence 5'-AACAAT-3'. This is Transcription factor SOX-7 (SOX7) from Homo sapiens (Human).